Reading from the N-terminus, the 105-residue chain is UPF0145 protein Mevan_1624 (105 aa).

This sequence belongs to the UPF0145 family.

The sequence is that of UPF0145 protein Mevan_1624 from Methanococcus vannielii (strain ATCC 35089 / DSM 1224 / JCM 13029 / OCM 148 / SB).